The following is a 594-amino-acid chain: UvrABC system protein C (594 aa).

One can recognise a GIY-YIG domain in the interval 14 to 91; that stretch reads DQPGCYLMKD…IKKHDPKYNI (78 aa). Positions 196 to 231 constitute a UVR domain; it reads KEVRSELETKMYEASEKLEFERAKELRDQIAHIDAI.

Belongs to the UvrC family. As to quaternary structure, interacts with UvrB in an incision complex.

The protein resides in the cytoplasm. In terms of biological role, the UvrABC repair system catalyzes the recognition and processing of DNA lesions. UvrC both incises the 5' and 3' sides of the lesion. The N-terminal half is responsible for the 3' incision and the C-terminal half is responsible for the 5' incision. This Bacillus cereus (strain Q1) protein is UvrABC system protein C.